Reading from the N-terminus, the 416-residue chain is MMPQLQFKDAFWCRDFTAHTGYEVLLQRLLDGRKMCKDMEELLRQRAQAEERYGKELVQIARKAGGQTEINSLRASFDSLKQQMENVGSSHIQLALTLREELRSLEEFRERQKEQRKKYEAVMDRVQKSKLSLYKKAMESKKTYEQKCRDADDAEQAFERISANGHQKQVEKSQNKARQCKDSATEAERVYRQSIAQLEKVRAEWEQEHRTTCEAFQLQEFDRLTILRNALWVHSNQLSMQCVKDDELYEEVRLTLEGCSIDADIDSFIQAKSTGTEPPAPVPYQNYYDREVTPLTSSPGIQPSCGMIKRFSGLLHGSPKTTSLAASAASTETLTPTPERNEGVYTAIAVQEIQGNPASPAQEYRALYDYTAQNPDELDLSAGDILEVILEGEDGWWTVERNGQRGFVPGSYLEKL.

The F-BAR domain occupies 5–264; the sequence is LQFKDAFWCR…TLEGCSIDAD (260 aa). The stretch at 166–212 forms a coiled coil; the sequence is HQKQVEKSQNKARQCKDSATEAERVYRQSIAQLEKVRAEWEQEHRTT. At serine 318 the chain carries Phosphoserine. Tyrosine 345 is modified (phosphotyrosine). In terms of domain architecture, SH3 spans 359 to 416; the sequence is SPAQEYRALYDYTAQNPDELDLSAGDILEVILEGEDGWWTVERNGQRGFVPGSYLEKL.

As to quaternary structure, homodimer. Homotrimer. Interacts (via coiled-coil domain) with CD2AP, PTPN12 and PTPN18. Interacts (via SH3 domain) with ABL1 and WAS. Interacts (via SH3 and coiled-coil domains) with MEFV (via B-box zinc finger); the interaction allows binding of MEFV to PYCARD and facilitates formation of PYCARD pyroptosomes. Interacts with CD2, DNM2 and FASLG. Post-translationally, dephosphorylated on Tyr-345 by PTPN18, this event negatively regulates the association of PSTPIP1 with SH2 domain-containing proteins as tyrosine kinase. Phosphorylation of Tyr-345 is probably required for subsequent phosphorylation at other tyrosine residues. Phosphorylation is induced by activation of the EGFR and PDGFR in a ABL1 dependent manner. The phosphorylation regulates the interaction with WAS and with MEFV. As to expression, highly expressed in the peripheral blood leukocytes, granulocytes and monocytes, namely in T-cells and natural killer cells, and in spleen. Weakly expressed in the thymus, small intestine, lung and placenta.

The protein resides in the cytoplasm. It localises to the cell membrane. Its subcellular location is the cell projection. It is found in the uropodium. The protein localises to the cytoskeleton. The protein resides in the perinuclear region. It localises to the lamellipodium. Its subcellular location is the cleavage furrow. In terms of biological role, involved in regulation of the actin cytoskeleton. May regulate WAS actin-bundling activity. Bridges the interaction between ABL1 and PTPN18 leading to ABL1 dephosphorylation. May play a role as a scaffold protein between PTPN12 and WAS and allow PTPN12 to dephosphorylate WAS. Has the potential to physically couple CD2 and CD2AP to WAS. Acts downstream of CD2 and CD2AP to recruit WAS to the T-cell:APC contact site so as to promote the actin polymerization required for synapse induction during T-cell activation. Down-regulates CD2-stimulated adhesion through the coupling of PTPN12 to CD2. Also has a role in innate immunity and the inflammatory response. Recruited to inflammasomes by MEFV. Induces formation of pyroptosomes, large supramolecular structures composed of oligomerized PYCARD dimers which form prior to inflammatory apoptosis. Binding to MEFV allows MEFV to bind to PYCARD and facilitates pyroptosome formation. Regulates endocytosis and cell migration in neutrophils. This Homo sapiens (Human) protein is Proline-serine-threonine phosphatase-interacting protein 1 (PSTPIP1).